Consider the following 694-residue polypeptide: Prolyl 3-hydroxylase 2 (694 aa).

The first 23 residues, methionine 1–glycine 23, serve as a signal peptide directing secretion. 4 TPR repeats span residues phenylalanine 35–leucine 68, arginine 136–histidine 169, histidine 196–glutamate 229, and proline 292–aspartate 325. A coiled-coil region spans residues lysine 386–threonine 418. The tract at residues histidine 395 to glutamate 427 is disordered. Asparagine 446 and asparagine 535 each carry an N-linked (GlcNAc...) asparagine glycan. A Fe2OG dioxygenase domain is found at threonine 543–leucine 657. Positions 566, 568, and 638 each coordinate Fe cation. Arginine 648 is an active-site residue. The Prevents secretion from ER signature appears at lysine 691–leucine 694.

It belongs to the leprecan family. Fe cation is required as a cofactor. L-ascorbate serves as cofactor.

Its subcellular location is the endoplasmic reticulum. The protein localises to the sarcoplasmic reticulum. It is found in the golgi apparatus. The catalysed reaction is L-prolyl-[collagen] + 2-oxoglutarate + O2 = trans-3-hydroxy-L-prolyl-[collagen] + succinate + CO2. Prolyl 3-hydroxylase that catalyzes the post-translational formation of 3-hydroxyproline on collagens. Contributes to proline 3-hydroxylation of collagen COL4A1 and COL1A1 in tendons, the eye sclera and in the eye lens capsule. Has high activity with the type IV collagen COL4A1, and lower activity with COL1A1. Catalyzes hydroxylation of the first Pro in Gly-Pro-Hyp sequences where Hyp is 4-hydroxyproline. Has no activity on substrates that lack 4-hydroxyproline in the third position. The polypeptide is Prolyl 3-hydroxylase 2 (Gallus gallus (Chicken)).